A 273-amino-acid polypeptide reads, in one-letter code: MHEAQIRVAIAGAGGRMGRQLIQAAMAMEGVQLGAALEREGSSLLGSDAGELAGVGKSGVTVQSSLEAVKDDFDVFIDFTRPEGTLTHLAFCRQHGKGMVIGTTGFDDAGKQAIREASQEIAIVFAANFSVGVNVMLKLLEKAAKVMGDYSDIEIIEAHHRHKVDAPSGTALAMGEAIAGALDKDLKDCAVYSREGYTGERVAGTIGFATVRAGDIVGEHTAMFADIGERVEITHKASSRMTFANGALRSALWLKTKKNGLFDMRDVLGLDVL.

NAD(+) is bound by residues 12-17 and glutamate 38; that span reads GAGGRM. Residue arginine 39 participates in NADP(+) binding. Residues 102–104 and 126–129 each bind NAD(+); these read GTT and AANF. Histidine 159 acts as the Proton donor/acceptor in catalysis. Residue histidine 160 participates in (S)-2,3,4,5-tetrahydrodipicolinate binding. Lysine 163 functions as the Proton donor in the catalytic mechanism. Residue 169-170 coordinates (S)-2,3,4,5-tetrahydrodipicolinate; sequence GT.

This sequence belongs to the DapB family. In terms of assembly, homotetramer.

It localises to the cytoplasm. It carries out the reaction (S)-2,3,4,5-tetrahydrodipicolinate + NAD(+) + H2O = (2S,4S)-4-hydroxy-2,3,4,5-tetrahydrodipicolinate + NADH + H(+). The enzyme catalyses (S)-2,3,4,5-tetrahydrodipicolinate + NADP(+) + H2O = (2S,4S)-4-hydroxy-2,3,4,5-tetrahydrodipicolinate + NADPH + H(+). It functions in the pathway amino-acid biosynthesis; L-lysine biosynthesis via DAP pathway; (S)-tetrahydrodipicolinate from L-aspartate: step 4/4. Its function is as follows. Catalyzes the conversion of 4-hydroxy-tetrahydrodipicolinate (HTPA) to tetrahydrodipicolinate. This Salmonella choleraesuis (strain SC-B67) protein is 4-hydroxy-tetrahydrodipicolinate reductase.